Consider the following 244-residue polypeptide: Protein crossbronx (244 aa).

One can recognise a UBC core domain in the interval 20–176 (QQEYKILAEY…VQKNIKESKD (157 aa)).

It belongs to the ubiquitin-conjugating enzyme family. FTS subfamily.

The polypeptide is Protein crossbronx (cbx) (Drosophila yakuba (Fruit fly)).